A 1842-amino-acid polypeptide reads, in one-letter code: Plexin-B2 (1842 aa).

Residues 1-19 (MALPLWALTFLGLTGLGLS) form the signal peptide. In terms of domain architecture, Sema spans 20–468 (LRSRKPESFR…TQDKVFRLPV (449 aa)). Topologically, residues 20–1201 (LRSRKPESFR…EYDTRASDVP (1182 aa)) are extracellular. 2 disulfides stabilise this stretch: Cys78–Cys87 and Cys112–Cys120. N-linked (GlcNAc...) asparagine glycosylation is found at Asn127 and Asn242. 3 disulfides stabilise this stretch: Cys250–Cys366, Cys266–Cys313, and Cys331–Cys353. Asn393 and Asn451 each carry an N-linked (GlcNAc...) asparagine glycan. 5 disulfides stabilise this stretch: Cys471–Cys488, Cys477–Cys520, Cys480–Cys497, Cys491–Cys503, and Cys557–Cys576. N-linked (GlcNAc...) asparagine glycosylation is present at Asn798. 3 IPT/TIG domains span residues 806 to 895 (PVIT…QFTY), 898 to 982 (PQPL…SFTY), and 986 to 1095 (PMIR…VFEY). N-linked (GlcNAc...) asparagine glycans are attached at residues Asn919, Asn1053, and Asn1072. The helical transmembrane segment at 1202-1222 (LSLILPLVMVPMVFIIVVSIY) threads the bilayer. Residues 1223-1842 (CYWRKSQQAE…AALENKVTDL (620 aa)) lie on the Cytoplasmic side of the membrane. 3 positions are modified to phosphoserine: Ser1240, Ser1248, and Ser1574.

The protein belongs to the plexin family. As to quaternary structure, monomer, and heterodimer with PLXNB1. Interacts with MET, ARHGEF11 and ARHGEF12. May also interact with MST1R. In terms of tissue distribution, detected in macrophages from spleen and bone marrow (at protein level). Detected in granule cells in the developing cerebellum, dentate gyrus and olfactory bulb. Expressed in neurons and glia in the developing hippocampus.

The protein localises to the cell membrane. Functionally, cell surface receptor for SEMA4C, SEMA4D and SEMA4G that plays an important role in cell-cell signaling. Plays a role in glutamatergic synapse development and is required for SEMA4A-mediated excitatory synapse development. Binding to class 4 semaphorins promotes downstream activation of RHOA and phosphorylation of ERBB2 at 'Tyr-1248'. Also acts as a cell surface receptor for angiogenin (ANG); promoting ANG endocytosis and translocation to the cytoplasm or nucleus. Required for normal differentiation and migration of neuronal cells during brain corticogenesis and for normal embryonic brain development. Regulates the migration of cerebellar granule cells in the developing brain. Plays a role in RHOA activation and subsequent changes of the actin cytoskeleton. Plays a role in axon guidance, invasive growth and cell migration. May modulate the activity of RAC1 and CDC42. Down-regulates macrophage migration in wound-healing assays (in vitro). This chain is Plexin-B2, found in Mus musculus (Mouse).